The primary structure comprises 434 residues: Tol-Pal system protein TolB (434 aa).

Residues Met1–Ala28 form the signal peptide.

Belongs to the TolB family. The Tol-Pal system is composed of five core proteins: the inner membrane proteins TolA, TolQ and TolR, the periplasmic protein TolB and the outer membrane protein Pal. They form a network linking the inner and outer membranes and the peptidoglycan layer.

Its subcellular location is the periplasm. Its function is as follows. Part of the Tol-Pal system, which plays a role in outer membrane invagination during cell division and is important for maintaining outer membrane integrity. The protein is Tol-Pal system protein TolB of Nitrosococcus oceani (strain ATCC 19707 / BCRC 17464 / JCM 30415 / NCIMB 11848 / C-107).